A 370-amino-acid polypeptide reads, in one-letter code: Cytochrome b (370 aa).

4 helical membrane-spanning segments follow: residues 25-45, 69-90, 105-125, and 170-190; these read FGSM…FLAI, WIMQ…YIHI, WLSG…GYVL, and FFAL…IHII. Heme b contacts are provided by His75 and His89. Residues His174 and His188 each contribute to the heme b site. Residue His193 coordinates a ubiquinone. 4 consecutive transmembrane segments (helical) span residues 218-238, 280-300, 312-332, and 339-358; these read YKDM…MSFT, LGGT…PFTH, LTQI…WTAT, and FISI…IINP.

This sequence belongs to the cytochrome b family. As to quaternary structure, the cytochrome bc1 complex contains 3 respiratory subunits (MT-CYB, CYC1 and UQCRFS1), 2 core proteins (UQCRC1 and UQCRC2) and probably 6 low-molecular weight proteins. It depends on heme b as a cofactor.

The protein resides in the mitochondrion inner membrane. In terms of biological role, component of the ubiquinol-cytochrome c reductase complex (complex III or cytochrome b-c1 complex) that is part of the mitochondrial respiratory chain. The b-c1 complex mediates electron transfer from ubiquinol to cytochrome c. Contributes to the generation of a proton gradient across the mitochondrial membrane that is then used for ATP synthesis. The sequence is that of Cytochrome b (MT-CYB) from Bungarus fasciatus (Banded krait).